A 120-amino-acid polypeptide reads, in one-letter code: Photosystem II extrinsic protein U (120 aa).

Residues 1–29 (MKRLLSLLTGVLVMTGLLMALIFPQSAYA) form the signal peptide.

It belongs to the PsbU family. As to quaternary structure, PSII is composed of 1 copy each of membrane proteins PsbA, PsbB, PsbC, PsbD, PsbE, PsbF, PsbH, PsbI, PsbJ, PsbK, PsbL, PsbM, PsbT, PsbX, PsbY, Psb30/Ycf12, peripheral proteins PsbO, CyanoQ (PsbQ), PsbU, PsbV and a large number of cofactors. It forms dimeric complexes.

It is found in the cellular thylakoid membrane. Its function is as follows. One of the extrinsic, lumenal subunits of photosystem II (PSII). PSII is a light-driven water plastoquinone oxidoreductase, using light energy to abstract electrons from H(2)O, generating a proton gradient subsequently used for ATP formation. The extrinsic proteins stabilize the structure of photosystem II oxygen-evolving complex (OEC), the ion environment of oxygen evolution and protect the OEC against heat-induced inactivation. In Prochlorococcus marinus (strain MIT 9313), this protein is Photosystem II extrinsic protein U.